Consider the following 622-residue polypeptide: MLSCSSFLIFFLFSWVLLPMKSFAIPIISLDKVRLAINDGASEQLPVVIWHGLGDTPTSFTLTEVSQRVQKLTKGAVYAIRVGDNEFEDIKAGYLGKLEDQLDEVCDLIGNEDSLSNGFYALGLSQGGLFLRALAQTCDAAKIRSLITLGSPHSGINTIPGCSPTNLICKAVVHSILGLGIWHSWIQNHVVQAQYYRTEKQYDKYLENNKFLTHLNNEVLHDNYTRNIEKLKELDNLVAVSFERDDIVEPPYSTGFGWINETTGENIEMEDFVLYESLGLKDLVNQGKLETISFPGRHLQMRWGDFDALVLKYFKDEKEEKTELEESTRPSNFLSTYFVSPLVSAIDGTVDYLHGKSLFPEKRNFKELTMRKRSIVTPEDSEEVYPYISEFVAASNVSEEKGPKSFANLAFITIFSHFFYHIDDMWRSTLGLFSLIPQIIGIIYLTVMFTGRELDTFMQFGGQVVNEFINYVVKVSLKYPRPADIEYGVGYGMPSSHSQFMGFFSAYMIAWDYKYRRSQCFSMLSFAKYAIYLTLSTFVCSSRYLLDFHYLTQVVYGYMIGFGVGLFWVYLVGKLRSLGVTKWLLSLPPLQFFYIKDTIPHSKDNHKRQWLESKQFKNQKSN.

An N-terminal signal peptide occupies residues 1 to 24 (MLSCSSFLIFFLFSWVLLPMKSFA). Residues 25-405 (IPIISLDKVR…NVSEEKGPKS (381 aa)) are Lumenal-facing. A disulfide bridge connects residues C106 and C138. Residue S125 is part of the active site. The N-linked (GlcNAc...) asparagine glycan is linked to N223. D245 is an active-site residue. N260 is a glycosylation site (N-linked (GlcNAc...) asparagine). H298 is an active-site residue. N-linked (GlcNAc...) asparagine glycosylation occurs at N396. Residues 406–426 (FANLAFITIFSHFFYHIDDMW) form a helical membrane-spanning segment. Topologically, residues 427–428 (RS) are cytoplasmic. The helical transmembrane segment at 429–449 (TLGLFSLIPQIIGIIYLTVMF) threads the bilayer. Residues 450–488 (TGRELDTFMQFGGQVVNEFINYVVKVSLKYPRPADIEYG) are Lumenal-facing. A helical membrane pass occupies residues 489 to 511 (VGYGMPSSHSQFMGFFSAYMIAW). The Cytoplasmic segment spans residues 512–519 (DYKYRRSQ). A helical membrane pass occupies residues 520-540 (CFSMLSFAKYAIYLTLSTFVC). Topologically, residues 541–552 (SSRYLLDFHYLT) are lumenal. The helical transmembrane segment at 553-573 (QVVYGYMIGFGVGLFWVYLVG) threads the bilayer. Topologically, residues 574-622 (KLRSLGVTKWLLSLPPLQFFYIKDTIPHSKDNHKRQWLESKQFKNQKSN) are cytoplasmic.

This sequence in the N-terminal section; belongs to the palmitoyl-protein thioesterase family. It in the C-terminal section; belongs to the dolichyldiphosphatase family. Proteolytically cleaved, possibly by krp1.

It is found in the vacuole. The protein resides in the endoplasmic reticulum membrane. It carries out the reaction S-hexadecanoyl-L-cysteinyl-[protein] + H2O = L-cysteinyl-[protein] + hexadecanoate + H(+). The enzyme catalyses a di-trans,poly-cis-dolichyl diphosphate + H2O = a di-trans,poly-cis-dolichyl phosphate + phosphate + H(+). Essential protein. Removes thioester-linked fatty acyl groups such as palmitate from modified cysteine residues in proteins or peptides during vacuolar degradation. Required for efficient N-glycosylation. Necessary for maintaining optimal levels of dolichol-linked oligosaccharides. The polypeptide is Palmitoyl-protein thioesterase-dolichyl pyrophosphate phosphatase fusion 1 (pdf1) (Schizosaccharomyces pombe (strain 972 / ATCC 24843) (Fission yeast)).